The sequence spans 146 residues: Large ribosomal subunit protein uL15 (146 aa).

The disordered stretch occupies residues methionine 1 to proline 65. Positions arginine 24–alanine 34 are enriched in gly residues.

Belongs to the universal ribosomal protein uL15 family. In terms of assembly, part of the 50S ribosomal subunit.

Functionally, binds to the 23S rRNA. This chain is Large ribosomal subunit protein uL15, found in Bordetella parapertussis (strain 12822 / ATCC BAA-587 / NCTC 13253).